A 231-amino-acid chain; its full sequence is Probable GTP-binding protein EngB (231 aa).

Residues 51–231 (DLSEIAFAGR…RAQLAALASP (181 aa)) enclose the EngB-type G domain. GTP-binding positions include 59–66 (GRSNVGKS), 86–90 (GRTQE), 109–112 (DLPG), 176–179 (TKAD), and 210–212 (TSS). Mg(2+) contacts are provided by serine 66 and threonine 88.

The protein belongs to the TRAFAC class TrmE-Era-EngA-EngB-Septin-like GTPase superfamily. EngB GTPase family. Mg(2+) serves as cofactor.

Necessary for normal cell division and for the maintenance of normal septation. In Rhodospirillum rubrum (strain ATCC 11170 / ATH 1.1.1 / DSM 467 / LMG 4362 / NCIMB 8255 / S1), this protein is Probable GTP-binding protein EngB.